A 537-amino-acid chain; its full sequence is Polyadenylate-binding protein 6 (537 aa).

RRM domains lie at 21 to 99, 112 to 188, 202 to 279, and 304 to 381; these read GSLY…WSQR, ANLY…KFIN, TNVY…KALK, and SNLY…VAER. The interval 503 to 537 is disordered; it reads KATTSEENRKEERRLTLSGKLSPEVKVEESGKQLQ. 2 stretches are compositionally biased toward basic and acidic residues: residues 506–517 and 525–537; these read TSEENRKEERRL and PEVKVEESGKQLQ.

Belongs to the polyadenylate-binding protein type-1 family. As to expression, expressed at low levels in leaves and young seedlings.

The protein resides in the cytoplasm. It localises to the nucleus. Functionally, binds the poly(A) tail of mRNA. Appears to be an important mediator of the multiple roles of the poly(A) tail in mRNA biogenesis, stability and translation. This chain is Polyadenylate-binding protein 6 (PAB6), found in Arabidopsis thaliana (Mouse-ear cress).